A 608-amino-acid polypeptide reads, in one-letter code: Endo-1,4-beta-xylanase C (608 aa).

An N-terminal signal peptide occupies residues Met1–Ala25. Residues Thr40–Met250 enclose the GH11 1 domain. The active-site Nucleophile is the Glu142. Glu237 (proton donor) is an active-site residue. Residues Ser263 to Lys294 show a composition bias toward low complexity. Positions Ser263–Asp296 are disordered. The GH11 2 domain occupies Asn316–Phe514. Residue Glu409 is the Nucleophile of the active site. The active-site Proton donor is the Glu501. Positions Ala520–Ser539 are disordered. Over residues Glu527–Ser539 the composition is skewed to low complexity.

The protein belongs to the glycosyl hydrolase 11 (cellulase G) family.

The catalysed reaction is Endohydrolysis of (1-&gt;4)-beta-D-xylosidic linkages in xylans.. Its pathway is glycan degradation; xylan degradation. Its function is as follows. Cleaves xylans with the production of xylose, xylobiose and xylo-oligosaccharides. This chain is Endo-1,4-beta-xylanase C (xynC), found in Fibrobacter succinogenes (strain ATCC 19169 / S85).